A 1182-amino-acid chain; its full sequence is uncharacterized protein (1182 aa).

The helical transmembrane segment at 618–638 (GSSSLVCSVMVVIFSIILYYL) threads the bilayer.

It is found in the host membrane. This is an uncharacterized protein from Callospermophilus lateralis (Golden-mantled ground squirrel).